The sequence spans 285 residues: Sulfotransferase 2A2 (285 aa).

3'-phosphoadenylyl sulfate-binding residues include Lys44, Ser45, Gly46, Thr47, Asn48, and Trp49. His99 functions as the Proton acceptor in the catalytic mechanism. Residues Arg121, Ser129, Tyr184, Ser218, Arg247, Lys248, and Gly249 each contribute to the 3'-phosphoadenylyl sulfate site.

Belongs to the sulfotransferase 1 family. In terms of tissue distribution, detected in liver.

The protein localises to the cytoplasm. It carries out the reaction an alcohol + 3'-phosphoadenylyl sulfate = an alkyl sulfate + adenosine 3',5'-bisphosphate + H(+). Functionally, sulfotransferase that utilizes 3'-phospho-5'-adenylyl sulfate (PAPS) as sulfonate donor to catalyze the sulfate conjugation of a potential wide variety of acceptor molecules bearing a hydroxyl group. Sulfonation increases the water solubility of most compounds, and therefore their renal excretion, but it can also result in bioactivation to form active metabolites. The chain is Sulfotransferase 2A2 from Rattus norvegicus (Rat).